We begin with the raw amino-acid sequence, 459 residues long: Cysteine--tRNA ligase (459 aa).

Cys-27 is a Zn(2+) binding site. A 'HIGH' region motif is present at residues 29–39 (PTVYDDAHLGH). Cys-202, His-231, and Glu-235 together coordinate Zn(2+). The short motif at 263 to 267 (KMSKS) is the 'KMSKS' region element. Lys-266 lines the ATP pocket.

It belongs to the class-I aminoacyl-tRNA synthetase family. Monomer. Zn(2+) serves as cofactor.

It is found in the cytoplasm. The catalysed reaction is tRNA(Cys) + L-cysteine + ATP = L-cysteinyl-tRNA(Cys) + AMP + diphosphate. In Campylobacter fetus subsp. fetus (strain 82-40), this protein is Cysteine--tRNA ligase.